A 403-amino-acid chain; its full sequence is Phosphoglycerate kinase (403 aa).

Residues 21–23 (DFN), R36, 59–62 (HLGR), R119, and R159 each bind substrate. ATP contacts are provided by residues K214, G301, E332, and 359-362 (GGDS).

Belongs to the phosphoglycerate kinase family. As to quaternary structure, monomer.

It localises to the cytoplasm. The enzyme catalyses (2R)-3-phosphoglycerate + ATP = (2R)-3-phospho-glyceroyl phosphate + ADP. The protein operates within carbohydrate degradation; glycolysis; pyruvate from D-glyceraldehyde 3-phosphate: step 2/5. In Lactobacillus delbrueckii subsp. lactis, this protein is Phosphoglycerate kinase.